The following is a 369-amino-acid chain: 4-hydroxy-3-methylbut-2-en-1-yl diphosphate synthase (flavodoxin) (369 aa).

[4Fe-4S] cluster is bound by residues cysteine 270, cysteine 273, cysteine 305, and glutamate 312.

It belongs to the IspG family. The cofactor is [4Fe-4S] cluster.

It carries out the reaction (2E)-4-hydroxy-3-methylbut-2-enyl diphosphate + oxidized [flavodoxin] + H2O + 2 H(+) = 2-C-methyl-D-erythritol 2,4-cyclic diphosphate + reduced [flavodoxin]. Its pathway is isoprenoid biosynthesis; isopentenyl diphosphate biosynthesis via DXP pathway; isopentenyl diphosphate from 1-deoxy-D-xylulose 5-phosphate: step 5/6. Its function is as follows. Converts 2C-methyl-D-erythritol 2,4-cyclodiphosphate (ME-2,4cPP) into 1-hydroxy-2-methyl-2-(E)-butenyl 4-diphosphate. The sequence is that of 4-hydroxy-3-methylbut-2-en-1-yl diphosphate synthase (flavodoxin) from Pseudomonas entomophila (strain L48).